A 492-amino-acid polypeptide reads, in one-letter code: Bifunctional purine biosynthesis protein PurH (492 aa).

In terms of domain architecture, MGS-like spans 1-144 (MKKAILSVSN…KNYKHVTTIV (144 aa)).

It belongs to the PurH family.

The enzyme catalyses (6R)-10-formyltetrahydrofolate + 5-amino-1-(5-phospho-beta-D-ribosyl)imidazole-4-carboxamide = 5-formamido-1-(5-phospho-D-ribosyl)imidazole-4-carboxamide + (6S)-5,6,7,8-tetrahydrofolate. The catalysed reaction is IMP + H2O = 5-formamido-1-(5-phospho-D-ribosyl)imidazole-4-carboxamide. It functions in the pathway purine metabolism; IMP biosynthesis via de novo pathway; 5-formamido-1-(5-phospho-D-ribosyl)imidazole-4-carboxamide from 5-amino-1-(5-phospho-D-ribosyl)imidazole-4-carboxamide (10-formyl THF route): step 1/1. Its pathway is purine metabolism; IMP biosynthesis via de novo pathway; IMP from 5-formamido-1-(5-phospho-D-ribosyl)imidazole-4-carboxamide: step 1/1. This chain is Bifunctional purine biosynthesis protein PurH, found in Staphylococcus aureus (strain MSSA476).